Consider the following 483-residue polypeptide: Endoplasmic reticulum lectin 1 (483 aa).

Positions 1–33 (MEEGGGGVRSLVPGGPVLLVLCGLLEASGGGRA) are cleaved as a signal peptide. MRH domains lie at 111–246 (SSCS…LCSH) and 342–469 (SYCF…ICKI). C113 and C126 form a disulfide bridge. Residue N195 is glycosylated (N-linked (GlcNAc...) asparagine). 5 disulfides stabilise this stretch: C199–C232, C215–C244, C344–C357, C421–C455, and C436–C467.

May form a complex with OS9, HSPA5, SYVN1, and SEL1L with which it interacts directly. Interacts (via PRKCSH 2 domain) with KREMEN2 (when glycosylated). Interacts with HSPA5. In terms of processing, isoform 1 and isoform 2 are N-glycosylated.

It localises to the endoplasmic reticulum lumen. In terms of biological role, probable lectin that binds selectively to improperly folded lumenal proteins. May function in endoplasmic reticulum quality control and endoplasmic reticulum-associated degradation (ERAD) of both non-glycosylated proteins and glycoproteins. The sequence is that of Endoplasmic reticulum lectin 1 (ERLEC1) from Homo sapiens (Human).